Consider the following 209-residue polypeptide: Probable GTP-binding protein EngB (209 aa).

Residues 23–198 (NGAEIAFAGR…EKVVAGWLVP (176 aa)) form the EngB-type G domain. Residues 31 to 38 (GRSNAGKS), 58 to 62 (GRTQL), 76 to 79 (DLPG), 143 to 146 (TKSD), and 177 to 179 (FSS) each bind GTP. Residues Ser38 and Thr60 each coordinate Mg(2+).

The protein belongs to the TRAFAC class TrmE-Era-EngA-EngB-Septin-like GTPase superfamily. EngB GTPase family. Mg(2+) serves as cofactor.

Functionally, necessary for normal cell division and for the maintenance of normal septation. This is Probable GTP-binding protein EngB from Azoarcus sp. (strain BH72).